Here is a 525-residue protein sequence, read N- to C-terminus: MTTNIHDQRILILDFGSQYTQLIARRVREIGVYCELWAWDVTEEQIREFNPNGIILSGGPESVHAKDSPRAPQYVFDAGVPVFGICYGMQTMAEQLGGAVLGSDMREFGYAQVEVVEQMALLNNIEDHVSPNGNALLDVWMSHGDKVAAVPDGFITAAKTDSCPFAAIVHPEKQFYGVQFHPEVTHTRQGQRMLSHFVLDICQCEKLWTPDAIIEDAVARMKKQIGDDEVILGLSGGVDSSVVAMLLHRAIGKNLTCVFVDNGLLRLNEGQQVMDMFGDHFGLNIIKIDAEERFLSALAGTDEPEAKRKIIGRVFVEVFDEESKKLKNAKWLAQGTIYPDVIESAGSATGKAHVIKSHHNVGGLPDDMAMGLVEPLRELFKDEVRKIGLELGLPYDMLYRHPFPGPGLGVRVLGEVKKEYCDLLRRADAIFIDELHKHDLYNKVSQAFTVFLPVKSVGVMGDARKYDWVVSLRAVETIDFMTAHWAHLPYEFLGKVSNRIINEIDGISRVVYDISGKPPATIEWE.

The Glutamine amidotransferase type-1 domain occupies 9–207; sequence RILILDFGSQ…VLDICQCEKL (199 aa). Residue Cys-86 is the Nucleophile of the active site. Active-site residues include His-181 and Glu-183. Residues 208–400 form the GMPS ATP-PPase domain; the sequence is WTPDAIIEDA…LGLPYDMLYR (193 aa). 235 to 241 is a binding site for ATP; it reads SGGVDSS.

Homodimer.

The catalysed reaction is XMP + L-glutamine + ATP + H2O = GMP + L-glutamate + AMP + diphosphate + 2 H(+). The protein operates within purine metabolism; GMP biosynthesis; GMP from XMP (L-Gln route): step 1/1. Catalyzes the synthesis of GMP from XMP. This is GMP synthase [glutamine-hydrolyzing] from Pseudoalteromonas atlantica (strain T6c / ATCC BAA-1087).